Consider the following 338-residue polypeptide: Anthranilate phosphoribosyltransferase (338 aa).

Residues glycine 81, 84–85 (GD), threonine 89, 91–94 (NIST), 109–117 (KHGNRALSS), and alanine 121 contribute to the 5-phospho-alpha-D-ribose 1-diphosphate site. Glycine 81 provides a ligand contact to anthranilate. Serine 93 contributes to the Mg(2+) binding site. Asparagine 112 provides a ligand contact to anthranilate. Residue arginine 167 participates in anthranilate binding. Aspartate 225 and glutamate 226 together coordinate Mg(2+).

This sequence belongs to the anthranilate phosphoribosyltransferase family. In terms of assembly, homodimer. Requires Mg(2+) as cofactor.

The enzyme catalyses N-(5-phospho-beta-D-ribosyl)anthranilate + diphosphate = 5-phospho-alpha-D-ribose 1-diphosphate + anthranilate. It functions in the pathway amino-acid biosynthesis; L-tryptophan biosynthesis; L-tryptophan from chorismate: step 2/5. In terms of biological role, catalyzes the transfer of the phosphoribosyl group of 5-phosphorylribose-1-pyrophosphate (PRPP) to anthranilate to yield N-(5'-phosphoribosyl)-anthranilate (PRA). The chain is Anthranilate phosphoribosyltransferase from Rhizobium etli (strain CIAT 652).